Reading from the N-terminus, the 565-residue chain is NAD-dependent malic enzyme (565 aa).

The active-site Proton donor is the Y104. R157 contacts NAD(+). K175 serves as the catalytic Proton acceptor. Residues E246, D247, and D270 each contribute to the a divalent metal cation site. NAD(+)-binding residues include D270 and N418.

It belongs to the malic enzymes family. In terms of assembly, homotetramer. Mg(2+) serves as cofactor. The cofactor is Mn(2+).

The catalysed reaction is (S)-malate + NAD(+) = pyruvate + CO2 + NADH. It catalyses the reaction oxaloacetate + H(+) = pyruvate + CO2. This chain is NAD-dependent malic enzyme, found in Escherichia coli O139:H28 (strain E24377A / ETEC).